Here is a 346-residue protein sequence, read N- to C-terminus: Heat-inducible transcription repressor HrcA (346 aa).

This sequence belongs to the HrcA family.

Its function is as follows. Negative regulator of class I heat shock genes (grpE-dnaK-dnaJ and groELS operons). Prevents heat-shock induction of these operons. This is Heat-inducible transcription repressor HrcA from Pediococcus pentosaceus (strain ATCC 25745 / CCUG 21536 / LMG 10740 / 183-1w).